We begin with the raw amino-acid sequence, 33 residues long: MNLEVVAQLTALAFIVLSGPLVIALLAFRKGNL.

Residues 8 to 28 traverse the membrane as a helical segment; it reads QLTALAFIVLSGPLVIALLAF.

The protein belongs to the Psb30/Ycf12 family. In terms of assembly, PSII is composed of 1 copy each of membrane proteins PsbA, PsbB, PsbC, PsbD, PsbE, PsbF, PsbH, PsbI, PsbJ, PsbK, PsbL, PsbM, PsbT, PsbX, PsbY, PsbZ, Psb30/Ycf12, peripheral proteins of the oxygen-evolving complex and a large number of cofactors. It forms dimeric complexes.

It is found in the plastid. The protein localises to the chloroplast thylakoid membrane. Functionally, a core subunit of photosystem II (PSII), probably helps stabilize the reaction center. The polypeptide is Photosystem II reaction center protein Psb30 (Staurastrum punctulatum (Green alga)).